The primary structure comprises 77 residues: Oxyopinin-4a (77 aa).

The N-terminal stretch at M1–A20 is a signal peptide. Positions N21–R47 are excised as a propeptide. Residues C51 and C57 are joined by a disulfide bond.

In terms of tissue distribution, expressed by the venom gland.

The protein resides in the secreted. The protein localises to the target cell membrane. Functionally, disrupts cell membranes through the formation of pores. Has antibacterial activity against Gram-positive bacteria S.aureus (MIC=10 uM) and B.subtilis (MIC=0.5 uM) as well as Gram-negative bacteria P.fluorescens (MIC=1 uM) and E.coli (MIC=0.5 uM). Has hemolytic activity against human erythrocytes (EC(50)=7 uM). The sequence is that of Oxyopinin-4a from Oxyopes takobius (Lynx spider).